Reading from the N-terminus, the 130-residue chain is Ribosome-binding factor A (130 aa).

Positions 111–130 are disordered; it reads RDLDDVGPEATSSDEDAEQR.

Belongs to the RbfA family. Monomer. Binds 30S ribosomal subunits, but not 50S ribosomal subunits or 70S ribosomes.

The protein localises to the cytoplasm. Functionally, one of several proteins that assist in the late maturation steps of the functional core of the 30S ribosomal subunit. Associates with free 30S ribosomal subunits (but not with 30S subunits that are part of 70S ribosomes or polysomes). Required for efficient processing of 16S rRNA. May interact with the 5'-terminal helix region of 16S rRNA. The protein is Ribosome-binding factor A of Xanthomonas euvesicatoria pv. vesicatoria (strain 85-10) (Xanthomonas campestris pv. vesicatoria).